We begin with the raw amino-acid sequence, 131 residues long: Antitoxin MqsA (131 aa).

Zn(2+) is bound by residues cysteine 3, cysteine 6, cysteine 37, and cysteine 40. The HTH cro/C1-type domain maps to 74–127 (IVKVRKKLSLTQKEASEIFGGGVNAFSRYEKGNAQPHPSTIKLLRVLDKHPELL). Positions 85–104 (QKEASEIFGGGVNAFSRYEK) form a DNA-binding region, H-T-H motif.

Homodimer. Crystallizes as a heterotetramer with MqsA, MqsR-MqsA(2)-MqsR. Purifies as a probable heterohexamer of 2 MqsR dimers and 1 MqsA dimer. Binds promoter DNA as a dimer. When the 2 dissociate the MsqR mRNA interferase becomes active. Zn(2+) is required as a cofactor. Degraded in the presence of oxidative stress, maybe by the Lon and/or ClpX proteases.

Antitoxin component of a type II toxin-antitoxin (TA) system. Labile antitoxin that binds to the MqsR mRNA interferase toxin and neutralizes its endoribonuclease activity. Overexpression prevents MqsR-mediated cessation of cell growth and inhibition of cell proliferation. Initially reported to act as a cotranscription factor with MqsA. Following further experiments, the MqsR-MqsA complex does not bind DNA and all reported data are actually due to a small fraction of free MqsA alone binding DNA. Addition of MqsR to a preformed MqsA-promoter DNA complex causes dissociation of the MqsA-DNA complex, probably causing derepression of MqsA-repressed transcripts. MqsA binds to 2 palindromes in the promoter region of the mqsRA operon activating its transcription. Binds to other promoters, inducing mcbR and spy and repressing cspD among others. Binds to and represses the rpoS promoter, the master stress regulator, resulting in decreased cyclic-di-GMP, reduced stress resistance, increased cell motility and decreased biofilm formation; in these experiments 5 TA systems are missing (lacks MazEF, RelEB, ChpB, YoeB-YefM, YafQ-DinJ). An earlier study showed overexpression alone increases biofilm formation, perhaps by repressing cspD; in these experiments the 5 TA systems are present. Represses the csgD promoter. In the presence of stress, when this protein is degraded, the promoters it represses are derepressed, leading to biofilm formation. This TA system mediates cell growth during bile acid deoxycholate stress by degrading mRNA for probable deoxycholate-binding protein YgiS; bile acid detergents such as deoxycholate are important for host defense against bacterial growth in the gall bladder and duodenum. This chain is Antitoxin MqsA, found in Escherichia coli (strain K12).